The sequence spans 289 residues: Ribonuclease HII (289 aa).

The disordered stretch occupies residues Met1–Gly55. Composition is skewed to low complexity over residues Lys7–Ala24 and Ala31–Gly55. Positions Trp76–Pro264 constitute an RNase H type-2 domain. Positions 82, 83, and 173 each coordinate a divalent metal cation.

Belongs to the RNase HII family. It depends on Mn(2+) as a cofactor. The cofactor is Mg(2+).

It localises to the cytoplasm. The catalysed reaction is Endonucleolytic cleavage to 5'-phosphomonoester.. Functionally, endonuclease that specifically degrades the RNA of RNA-DNA hybrids. The sequence is that of Ribonuclease HII from Bradyrhizobium sp. (strain BTAi1 / ATCC BAA-1182).